Here is a 314-residue protein sequence, read N- to C-terminus: tRNA dimethylallyltransferase (314 aa).

13–20 (GPTAVGKT) is a binding site for ATP. A substrate-binding site is contributed by 15–20 (TAVGKT). The interaction with substrate tRNA stretch occupies residues 38 to 41 (DSMQ).

This sequence belongs to the IPP transferase family. Monomer. Mg(2+) serves as cofactor.

It catalyses the reaction adenosine(37) in tRNA + dimethylallyl diphosphate = N(6)-dimethylallyladenosine(37) in tRNA + diphosphate. In terms of biological role, catalyzes the transfer of a dimethylallyl group onto the adenine at position 37 in tRNAs that read codons beginning with uridine, leading to the formation of N6-(dimethylallyl)adenosine (i(6)A). The chain is tRNA dimethylallyltransferase from Bacillus licheniformis (strain ATCC 14580 / DSM 13 / JCM 2505 / CCUG 7422 / NBRC 12200 / NCIMB 9375 / NCTC 10341 / NRRL NRS-1264 / Gibson 46).